Reading from the N-terminus, the 208-residue chain is Uracil phosphoribosyltransferase (208 aa).

5-phospho-alpha-D-ribose 1-diphosphate contacts are provided by residues Arg78, Arg103, and 130-138 (DPMLATANS). Uracil contacts are provided by residues Ile193 and 198–200 (GDA). Residue Asp199 participates in 5-phospho-alpha-D-ribose 1-diphosphate binding.

It belongs to the UPRTase family. Requires Mg(2+) as cofactor.

It catalyses the reaction UMP + diphosphate = 5-phospho-alpha-D-ribose 1-diphosphate + uracil. It functions in the pathway pyrimidine metabolism; UMP biosynthesis via salvage pathway; UMP from uracil: step 1/1. Its activity is regulated as follows. Allosterically activated by GTP. Functionally, catalyzes the conversion of uracil and 5-phospho-alpha-D-ribose 1-diphosphate (PRPP) to UMP and diphosphate. This chain is Uracil phosphoribosyltransferase, found in Brucella ovis (strain ATCC 25840 / 63/290 / NCTC 10512).